We begin with the raw amino-acid sequence, 917 residues long: MMETPTDNIVSPFHNFGSSTQYSGTLSRTPNQIIELEKPSTLSPLSRGKKWTEKLARFQRSSAKKKRFSPSPISSSTFSFSPKSRVTSSNSSGNEDGNLMNTPSTVSTDYLPQHPHRTSSLPRPNSNLFHASNSNLSRANEPPRAENLSDNIPPKVAPFGYPIQRTSIKKSFLNASCTLCDEPISNRRKGEKIIELACGHLSHQECLIISFGTTSKADVRALFPFCTKCKKDTNKAVQCIPENDELKDILISDFLIHKIPDSELSITPQSRFPPYSPLLPPFGLSYTPVERQTIYSQAPSLNPNLILAAPPKERNQIPQKKSNYTFLHSPLGHRRIPSGANSILADTSVALSANDSISAVSNSVRAKDDETKTTLPLLRSYFIQILLNNFQEELQDWRIDGDYGLLRLVDKLMISKDGQRYIQCWCFLFEDAFVIAEVDNDVDVLEIRLKNLEVFTPIANLRMTTLEASVLKCTLNKQHCADLSDLYIVQNINSDESTTVQKWISGILNQDFVFNEDNITSTLPILPIIKNFSKDVGNGRHETSTFLGLINPNKVVEVGNVHDNDTVIIRRGFTLNSGECSRQSTVDSIQSVLTTISSILSLKREKPDNLAIILQIDFTKLKEEDSLIVVYNSLKALTIKFARLQFCFVDRNNYVLDYGSVLHKIDSLDSISNLKSKSSSTQFSPIWLKNTLYPENIHEHLGIVAVSNSNMEAKKSILFQDYRCFTSFGRRRPNELKIKVGYLNVDYSDKIDELVEASSWTFVLETLCYSFGLSFDEHDDDDEEDNDDSTDNELDNSSGSLSDAESTTTIHIDSPFDNENATANMVNDRNLLTEGEHSNIENLETVASSVQPALIPNIRFSLHSEEEGTNENENENDMPVLLLSDMDKGIDGITRRSSFSSLIESGNNNCPLHMDYI.

2 disordered regions span residues M1–T25 and F58–N151. A compositionally biased stretch (polar residues) spans F16–T25. The segment covering S69–S84 has biased composition (low complexity). Polar residues-rich tracts occupy residues R85–Y110 and T118–R138. S329 carries the post-translational modification Phosphoserine. Over residues H778 to L794 the composition is skewed to acidic residues. Residues H778–A821 form a disordered region. The segment covering G799–A821 has biased composition (polar residues).

This sequence to yeast FAR1. May be regulated at the phosphorylation level, and by the mating type of the cell and depends on an intact pheromone-response pathway.

The protein resides in the cytoplasm. Component of the pheromone signal transduction pathway. It mediates pheromone signals acting between STE20 and STE11. It is absolutely required for pheromone-induced transcription of FUS1. May play a role in cell-cycle arrest in response to pheromone. The chain is Protein STE5 (STE5) from Saccharomyces cerevisiae (strain ATCC 204508 / S288c) (Baker's yeast).